The chain runs to 276 residues: Rhomboid protease GlpG (276 aa).

6 helical membrane passes run 94-114 (GPVTWVMMIACVVVFIAMQIL), 142-162 (ALMHFSLMHILFNLLWWWYLG), 169-189 (LGSGKLIVITLISALLSGYVQ), 192-212 (FSGPWFGGLSGVVYALMGYVW), 229-249 (LIIFALIWIVAGWFDLFGMSM), and 250-270 (ANGAHIAGLAVGLAMAFVDSL). Serine 201 serves as the catalytic Nucleophile. Residue histidine 254 is part of the active site.

The protein belongs to the peptidase S54 family.

It is found in the cell inner membrane. It catalyses the reaction Cleaves type-1 transmembrane domains using a catalytic dyad composed of serine and histidine that are contributed by different transmembrane domains.. Rhomboid-type serine protease that catalyzes intramembrane proteolysis. The sequence is that of Rhomboid protease GlpG from Escherichia coli O45:K1 (strain S88 / ExPEC).